Here is a 972-residue protein sequence, read N- to C-terminus: Isoleucine--tRNA ligase (972 aa).

A 'HIGH' region motif is present at residues 63-73 (PYANGNIHIGH). Glu603 contacts L-isoleucyl-5'-AMP. Positions 644-648 (KMSKS) match the 'KMSKS' region motif. Lys647 lines the ATP pocket.

The protein belongs to the class-I aminoacyl-tRNA synthetase family. IleS type 1 subfamily. Monomer.

It localises to the cytoplasm. The catalysed reaction is tRNA(Ile) + L-isoleucine + ATP = L-isoleucyl-tRNA(Ile) + AMP + diphosphate. Functionally, catalyzes the attachment of isoleucine to tRNA(Ile). As IleRS can inadvertently accommodate and process structurally similar amino acids such as valine, to avoid such errors it has two additional distinct tRNA(Ile)-dependent editing activities. One activity is designated as 'pretransfer' editing and involves the hydrolysis of activated Val-AMP. The other activity is designated 'posttransfer' editing and involves deacylation of mischarged Val-tRNA(Ile). This chain is Isoleucine--tRNA ligase, found in Brucella melitensis biotype 1 (strain ATCC 23456 / CCUG 17765 / NCTC 10094 / 16M).